The chain runs to 985 residues: Coiled-coil domain-containing protein 33 (985 aa).

The segment at 228–263 is disordered; that stretch reads MSPFSTDSDQEGLSWEAGPWQHPAQVPEEPQGRLDT. Residues 263 to 398 form the C2 domain; that stretch reads TSQDPYPAAN…VFLRGVNEPL (136 aa). A coiled-coil region spans residues 599 to 745; it reads VEMNNYRRAM…LEERLCERKE (147 aa). The segment at 821-842 is disordered; sequence AERLQDTNGPGHPKSTETLPAQ. Residues 885-928 are a coiled coil; sequence DKFNLLAKLEQAQSRILSLENQLEESARHWAREKQNLAIRLQEQ. Positions 931–985 are disordered; the sequence is GFGQPPNSIIIDQPNAGASKNPQQLSKLEPSLPSSDKKLNRPSDSQIEISNNQKT. Composition is skewed to polar residues over residues 946-956 and 972-985; these read AGASKNPQQLS and PSDS…NQKT.

The protein is Coiled-coil domain-containing protein 33 (Ccdc33) of Mus musculus (Mouse).